The chain runs to 152 residues: Clitocypin-2 (152 aa).

This sequence belongs to the protease inhibitor I48 family. Homodimer. In terms of tissue distribution, expressed in all analyzed tissues, but expression was higher in the pileus and in the lower part of the stipe.

Functionally, binds and inhibits cysteine proteinases. Inhibits most strongly papain and cathepsin L, more weakly bromelain and cathepsin B while it is completely ineffective against cathepsin H. The chain is Clitocypin-2 (clt2) from Clitocybe nebularis (Clouded agaric).